The sequence spans 185 residues: Large ribosomal subunit protein uL5c (185 aa).

It belongs to the universal ribosomal protein uL5 family. Part of the 50S ribosomal subunit; contacts the 5S rRNA.

It is found in the plastid. It localises to the chloroplast. Functionally, binds 5S rRNA, forms part of the central protuberance of the 50S subunit. The polypeptide is Large ribosomal subunit protein uL5c (rpl5) (Chlorokybus atmophyticus (Soil alga)).